Reading from the N-terminus, the 247-residue chain is DNA polymerase sliding clamp (247 aa).

The protein belongs to the PCNA family. In terms of assembly, homotrimer. The subunits circularize to form a toroid; DNA passes through its center. Replication factor C (RFC) is required to load the toroid on the DNA.

Functionally, sliding clamp subunit that acts as a moving platform for DNA processing. Responsible for tethering the catalytic subunit of DNA polymerase and other proteins to DNA during high-speed replication. The protein is DNA polymerase sliding clamp of Methanoculleus marisnigri (strain ATCC 35101 / DSM 1498 / JR1).